The sequence spans 213 residues: uncharacterized protein (213 aa).

Residues G53, E74, and D97 each coordinate S-adenosyl-L-methionine.

It belongs to the methyltransferase superfamily. YrrT family.

Its function is as follows. Could be a S-adenosyl-L-methionine-dependent methyltransferase. This is an uncharacterized protein from Bacillus velezensis (strain DSM 23117 / BGSC 10A6 / LMG 26770 / FZB42) (Bacillus amyloliquefaciens subsp. plantarum).